We begin with the raw amino-acid sequence, 179 residues long: Ribosome maturation factor RimM (179 aa).

Positions 95 to 174 constitute a PRC barrel domain; the sequence is KDEFFYFDIL…QIFCTQDAFL (80 aa).

This sequence belongs to the RimM family. In terms of assembly, binds ribosomal protein uS19.

The protein localises to the cytoplasm. An accessory protein needed during the final step in the assembly of 30S ribosomal subunit, possibly for assembly of the head region. Essential for efficient processing of 16S rRNA. May be needed both before and after RbfA during the maturation of 16S rRNA. It has affinity for free ribosomal 30S subunits but not for 70S ribosomes. In Campylobacter jejuni subsp. jejuni serotype O:6 (strain 81116 / NCTC 11828), this protein is Ribosome maturation factor RimM.